The sequence spans 206 residues: Large ribosomal subunit protein uL4 (206 aa).

The segment at 44–87 (KRQGTHATKTRGMKRGGGAKPWRQKGTGRARAGSTRSPLWRGGG) is disordered.

This sequence belongs to the universal ribosomal protein uL4 family. Part of the 50S ribosomal subunit.

In terms of biological role, one of the primary rRNA binding proteins, this protein initially binds near the 5'-end of the 23S rRNA. It is important during the early stages of 50S assembly. It makes multiple contacts with different domains of the 23S rRNA in the assembled 50S subunit and ribosome. Forms part of the polypeptide exit tunnel. This is Large ribosomal subunit protein uL4 from Maridesulfovibrio salexigens (strain ATCC 14822 / DSM 2638 / NCIMB 8403 / VKM B-1763) (Desulfovibrio salexigens).